The sequence spans 176 residues: Translation initiation factor IF-3 (176 aa).

It belongs to the IF-3 family. Monomer.

It localises to the cytoplasm. Its function is as follows. IF-3 binds to the 30S ribosomal subunit and shifts the equilibrium between 70S ribosomes and their 50S and 30S subunits in favor of the free subunits, thus enhancing the availability of 30S subunits on which protein synthesis initiation begins. In Streptococcus uberis (strain ATCC BAA-854 / 0140J), this protein is Translation initiation factor IF-3.